Reading from the N-terminus, the 308-residue chain is U-box domain-containing protein 54 (308 aa).

The interval 172-235 (FSEFSTSAEK…NESDEDPRLE (64 aa)) is disordered. Basic and acidic residues predominate over residues 210-227 (ESPKKGRKETIEKSKSNE). Residues 232–306 (PRLEDFKCPI…KDWLEKNPNY (75 aa)) enclose the U-box domain.

It carries out the reaction S-ubiquitinyl-[E2 ubiquitin-conjugating enzyme]-L-cysteine + [acceptor protein]-L-lysine = [E2 ubiquitin-conjugating enzyme]-L-cysteine + N(6)-ubiquitinyl-[acceptor protein]-L-lysine.. Its pathway is protein modification; protein ubiquitination. Functions as an E3 ubiquitin ligase. In Arabidopsis thaliana (Mouse-ear cress), this protein is U-box domain-containing protein 54 (PUB54).